A 214-amino-acid polypeptide reads, in one-letter code: tRNA (guanine-N(7)-)-methyltransferase (214 aa).

Glu-43, Glu-68, Asn-99, and Asp-121 together coordinate S-adenosyl-L-methionine. Asp-121 is a catalytic residue. Residues Lys-125, Asp-157, and 194 to 197 (TEYE) contribute to the substrate site.

Belongs to the class I-like SAM-binding methyltransferase superfamily. TrmB family.

The catalysed reaction is guanosine(46) in tRNA + S-adenosyl-L-methionine = N(7)-methylguanosine(46) in tRNA + S-adenosyl-L-homocysteine. Its pathway is tRNA modification; N(7)-methylguanine-tRNA biosynthesis. In terms of biological role, catalyzes the formation of N(7)-methylguanine at position 46 (m7G46) in tRNA. The sequence is that of tRNA (guanine-N(7)-)-methyltransferase from Alkaliphilus metalliredigens (strain QYMF).